We begin with the raw amino-acid sequence, 512 residues long: UDP-N-acetylglucosamine--peptide N-acetylglucosaminyltransferase GtfA subunit (512 aa).

A UDP-binding site is contributed by 16–19; that stretch reads GVEY. H251 lines the N-acetyl-D-glucosamine pocket. UDP contacts are provided by residues 393–394 and 413–416; these read QH and EGFG.

The protein belongs to the glycosyltransferase group 1 family. Glycosyltransferase 4 subfamily. As to quaternary structure, forms a heterotetramer with 2 subunits each of GtfA and GtfB. Part of the accessory SecA2/SecY2 protein translocation apparatus.

The protein resides in the cytoplasm. It localises to the cell membrane. It catalyses the reaction L-seryl-[protein] + UDP-N-acetyl-alpha-D-glucosamine = 3-O-[N-acetyl-alpha-D-glucosaminyl]-L-seryl-[protein] + UDP + H(+). It functions in the pathway protein modification; protein glycosylation. In terms of biological role, required for polymorphic O-glycosylation of the serine-rich repeat protein (SRRP) in this bacteria. Catalyzes the first step in glycosylation by transferring N-acetylglucosamine from UDP-GlcNAc to serine residues in the substrate protein. Part of the accessory SecA2/SecY2 system specifically required to export serine-rich repeat cell wall proteins encoded in the same operon. The GtfA-GtfB complex adds GlcNAc from UDP-GlcNAc to SRRP (experimentally characterized with a truncated SSR1 construct); the alpha linkage was shown for this enzyme but not the residues glycosylated on SRRP. This is UDP-N-acetylglucosamine--peptide N-acetylglucosaminyltransferase GtfA subunit from Limosilactobacillus reuteri subsp. suis (strain ATCC 53608 / LMG 31752 / 1063) (Lactobacillus reuteri).